The chain runs to 333 residues: DNA-directed RNA polymerase subunit alpha (333 aa).

The tract at residues 1–246 (MKKMVQIKYK…AHLQVIGDVK (246 aa)) is alpha N-terminal domain (alpha-NTD). The segment at 262–333 (VEPSIHSVDI…YNVTLNRGEK (72 aa)) is alpha C-terminal domain (alpha-CTD).

Belongs to the RNA polymerase alpha chain family. Homodimer. The RNAP catalytic core consists of 2 alpha, 1 beta, 1 beta' and 1 omega subunit. When a sigma factor is associated with the core the holoenzyme is formed, which can initiate transcription.

It carries out the reaction RNA(n) + a ribonucleoside 5'-triphosphate = RNA(n+1) + diphosphate. DNA-dependent RNA polymerase catalyzes the transcription of DNA into RNA using the four ribonucleoside triphosphates as substrates. The protein is DNA-directed RNA polymerase subunit alpha of Mycoplasmopsis pulmonis (strain UAB CTIP) (Mycoplasma pulmonis).